The chain runs to 265 residues: Small ribosomal subunit protein uS5 (265 aa).

The segment covering 1–15 has biased composition (low complexity); the sequence is MADTQPAQEAPAADA. The segment at 1-44 is disordered; it reads MADTQPAQEAPAADAPRAERNFGRGRGGRGGRGRGRGGPGEEKE. The span at 26-35 shows a compositional bias: basic residues; it reads RGGRGGRGRG. In terms of domain architecture, S5 DRBM spans 88–151; that stretch reads LHDEMMKIYP…IAAKLNIVPV (64 aa). A disordered region spans residues 245 to 265; it reads TEPSRDPTDEHGELLAEMTTA. A compositionally biased stretch (basic and acidic residues) spans 246–258; it reads EPSRDPTDEHGEL.

The protein belongs to the universal ribosomal protein uS5 family.

Functionally, component of the ribosome, a large ribonucleoprotein complex responsible for the synthesis of proteins in the cell. The small ribosomal subunit (SSU) binds messenger RNAs (mRNAs) and translates the encoded message by selecting cognate aminoacyl-transfer RNA (tRNA) molecules. The large subunit (LSU) contains the ribosomal catalytic site termed the peptidyl transferase center (PTC), which catalyzes the formation of peptide bonds, thereby polymerizing the amino acids delivered by tRNAs into a polypeptide chain. The nascent polypeptides leave the ribosome through a tunnel in the LSU and interact with protein factors that function in enzymatic processing, targeting, and the membrane insertion of nascent chains at the exit of the ribosomal tunnel. Plays a role in the assembly and function of the 40S ribosomal subunit. Mutations in this protein affects the control of translational fidelity. Involved in nucleolar processing of pre-18S ribosomal RNA and ribosome assembly. The sequence is that of Small ribosomal subunit protein uS5 from Leishmania amazonensis.